The following is a 277-amino-acid chain: Undecaprenyl-diphosphatase (277 aa).

5 helical membrane-spanning segments follow: residues F83–S103, L109–I129, A188–V208, A218–V238, and Y256–A276.

It belongs to the UppP family.

Its subcellular location is the cell inner membrane. It catalyses the reaction di-trans,octa-cis-undecaprenyl diphosphate + H2O = di-trans,octa-cis-undecaprenyl phosphate + phosphate + H(+). Its function is as follows. Catalyzes the dephosphorylation of undecaprenyl diphosphate (UPP). Confers resistance to bacitracin. The polypeptide is Undecaprenyl-diphosphatase (Janthinobacterium sp. (strain Marseille) (Minibacterium massiliensis)).